Reading from the N-terminus, the 111-residue chain is Large ribosomal subunit protein uL22 (111 aa).

The protein belongs to the universal ribosomal protein uL22 family. As to quaternary structure, part of the 50S ribosomal subunit.

Functionally, this protein binds specifically to 23S rRNA; its binding is stimulated by other ribosomal proteins, e.g. L4, L17, and L20. It is important during the early stages of 50S assembly. It makes multiple contacts with different domains of the 23S rRNA in the assembled 50S subunit and ribosome. The globular domain of the protein is located near the polypeptide exit tunnel on the outside of the subunit, while an extended beta-hairpin is found that lines the wall of the exit tunnel in the center of the 70S ribosome. This chain is Large ribosomal subunit protein uL22, found in Fusobacterium nucleatum subsp. nucleatum (strain ATCC 25586 / DSM 15643 / BCRC 10681 / CIP 101130 / JCM 8532 / KCTC 2640 / LMG 13131 / VPI 4355).